Consider the following 576-residue polypeptide: MAENNEKYRSFRLACDRCRSHKLKCPQQPSTATGACQRCTRAKAQCTFSPRSRAIKNTQDGGSIRGKAIKKPAKRGGSQSPSAPGSPPPTATENPPQQQQSDQQKPSGSNRWDSPWGPLGTFDVLYPTPQAAFPAAAEVSPSDFSAAMSMGSTFMDCSPFAETSSGFDFQFDMDHPSGLPYYNNSTDPSLAVQSGGTEDDDVPMASTVDNSRCHEKEDCTKKLSCLAVEFQRHLALFNKHSTSHGGADKKGARTGSDGEEAQHWLSTYPIGEILCLSGDFSSILEPELYPHGRAAPVSIDETTNDARGPVVPVGQRDGHHANLSDSGTTIGLEVAHAGHPPPPHLSHHRHCQPSPPGSLPTPTSRSSTAAVMDTPTALLILNCYVSMIRIYSALFAHLHAHLRHPAPSHSSARHRHSRSTLHRRYSSGIPDPALKFGELPPAPSDDVSLRAYTAVRLLLDALQRSEELLGLPADLRCASVSGAPVGARDDDGDDDEEEEEEDTAAAILSSDSEAESLGSSVCVLPGGCGEIIGAELARAVFRQEAQMGSEQGGGGLEVLRRNIAGVKRSLRQRMAL.

The segment at residues 15–46 is a DNA-binding region (zn(2)-C6 fungal-type); sequence CDRCRSHKLKCPQQPSTATGACQRCTRAKAQC. Polar residues predominate over residues 47–61; it reads TFSPRSRAIKNTQDG. 3 disordered regions span residues 47–123, 334–369, and 404–424; these read TFSP…GTFD, VAHAGHPPPPHLSHHRHCQPSPPGSLPTPTSRSSTA, and HPAPSHSSARHRHSRSTLHRR. Residues 95-109 show a composition bias toward low complexity; the sequence is PPQQQQSDQQKPSGS.

It is found in the nucleus. In terms of biological role, transcription factor; part of the gene cluster that mediates the biosynthesis of macrophasetins, 3-decalinoyltetramic acids (DTAs) which feature a tetramate (pyrrolidine-2,4-dione) unit connected to a decalin fragment and that have potent bioactivities. In Macrophomina phaseolina (strain MS6) (Charcoal rot fungus), this protein is Zn(2)-C6 fungal-type transcription factor mpsE.